The chain runs to 801 residues: Cadherin-20 (801 aa).

Residues 1-34 (MWTTGRMSNAKSWLGLGTSLYFWALMDLATTVLS) form the signal peptide. Residues 35–59 (STPMPEVELDTLFSGKPQSHQRSRR) constitute a propeptide that is removed on maturation. Over 60 to 619 (SWVWNQFFVL…AYMLPVSLSR (560 aa)) the chain is Extracellular. Cadherin domains lie at 61–165 (WVWN…EPKF), 166–274 (LDGP…PPRF), 275–389 (PQKH…PPVF), 390–494 (EPRF…APEF), and 494–610 (FPRF…SPEA). N261 carries N-linked (GlcNAc...) asparagine glycosylation. N-linked (GlcNAc...) asparagine glycosylation is found at N420, N461, and N542. The chain crosses the membrane as a helical span at residues 620–640 (GALIAILACVFVLLVLVLLIL). The Cytoplasmic segment spans residues 641–801 (SMRRHRKQPY…GASEGPSPLW (161 aa)).

It localises to the cell membrane. Cadherins are calcium-dependent cell adhesion proteins. They preferentially interact with themselves in a homophilic manner in connecting cells; cadherins may thus contribute to the sorting of heterogeneous cell types. In Rattus norvegicus (Rat), this protein is Cadherin-20 (Cdh20).